Here is a 145-residue protein sequence, read N- to C-terminus: Transcriptional regulator SlyA (145 aa).

The 134-residue stretch at 2-135 (ELPLGSDLAR…LALLVSRLEK (134 aa)) folds into the HTH marR-type domain. Residues 49 to 72 (QIQLAKAIGIEQPSLVRTLDQLEE) constitute a DNA-binding region (H-T-H motif).

Belongs to the SlyA family. Homodimer.

Its function is as follows. Transcription regulator that can specifically activate or repress expression of target genes. Regulates genes involved in production of antibiotic and exoenzyme virulence determinants in the phytopathogen. Required for the expression of the virulence protein evf during Drosophila melanogaster infection. In Pectobacterium carotovorum subsp. carotovorum (Erwinia carotovora subsp. carotovora), this protein is Transcriptional regulator SlyA.